The chain runs to 370 residues: MEHRIYNSNYFLDITIPYFFHPEILIRIFRRHIQDIPFLHFLRTLLYKNKCLNILNIENFFYLKKNQFFCFLWNFYIYEFEYLLNDIWEKFYKFESVFFWNFIDKTNSIKKIKHILKKSKKPIEKKIVKKISSIHYIRYKNNLIITLNDRNILILENWKDFFLIFWQKYFNVWFKSSRILIQNFYKNSFSFLGYMFRIESQIILIQIQIINLLRNVNLIKKEFCSIIPVIPLIRLLAKEKFCDVLGRPLCKLSWTTLSDNEIFERFDQIIKHIFSYYSGCINKKGLYQLQYIFRFSCAKTLACKHKSTIRTVWKKYGSNLLTSSIFFNKTKLISLNFSNKNPYKKNFWYLNIIQVNYLAHSLQKSKLLKE.

Belongs to the intron maturase 2 family. MatK subfamily.

Its subcellular location is the plastid. The protein resides in the chloroplast. Its function is as follows. Usually encoded in the trnK tRNA gene intron. Probably assists in splicing its own and other chloroplast group II introns. The sequence is that of Maturase K from Marchantia polymorpha (Common liverwort).